The sequence spans 465 residues: Lactaldehyde dehydrogenase (465 aa).

Position 220–225 (220–225) interacts with NAD(+); that stretch reads GSVEVG. Residues Glu-240 and Cys-274 contribute to the active site.

Belongs to the aldehyde dehydrogenase family. As to quaternary structure, homotetramer.

The enzyme catalyses (S)-lactaldehyde + NAD(+) + H2O = (S)-lactate + NADH + 2 H(+). It functions in the pathway cofactor biosynthesis; coenzyme F420 biosynthesis. In terms of biological role, involved in F420 biosynthesis through the oxidation of lactaldehyde to lactate. This chain is Lactaldehyde dehydrogenase, found in Methanococcus vannielii (strain ATCC 35089 / DSM 1224 / JCM 13029 / OCM 148 / SB).